The sequence spans 645 residues: Envelope glycoprotein (645 aa).

Residues 1–33 form the signal peptide; that stretch reads MESPAFSKPLKDKINPWGPLIIMGILVRAGASV. Positions 32–237 are receptor-binding domain (RBD); that stretch reads SVQRDSPHQV…QVLNVGPRVP (206 aa). The Extracellular portion of the chain corresponds to 34 to 585; the sequence is QRDSPHQVFN…FNRSPWFTTL (552 aa). N-linked (GlcNAc...) asparagine; by host glycosylation is found at N43 and N58. 2 disulfides stabilise this stretch: C113/C130 and C122/C135. Residues 259 to 286 form a disordered region; that stretch reads PRPPRPPPSGAASMVPGAPPPSQQPGTG. N301 carries an N-linked (GlcNAc...) asparagine; by host glycan. Intrachain disulfides connect C311/C314, C311/C538, C341/C395, C360/C372, C402/C415, and C530/C537. The CXXC signature appears at 311–314; sequence CWLC. N333 and N340 each carry an N-linked (GlcNAc...) asparagine; by host glycan. N-linked (GlcNAc...) asparagine; by host glycans are attached at residues N373 and N409. Residues 447 to 467 are fusion peptide; sequence VSLTLALLLGGLTMGGIAAGV. Residues 490-510 are a coiled coil; the sequence is DLGALEKSVSALEKSLTSLSE. The interval 513–529 is immunosuppression; that stretch reads LQNRRGLDLLFLKEGGL. Residues 530-538 carry the CX6CC motif; sequence CAALKKECC. The chain crosses the membrane as a helical span at residues 586–606; it reads ISTIMGPLIVLLLILLFGPCI. C605 carries S-palmitoyl cysteine; by host lipidation. Residues 607-640 lie on the Cytoplasmic side of the membrane; sequence LNRLVQFVKDRISVVQALVLTQQYHQLKSIDPEE. The YXXL motif; contains endocytosis signal motif lies at 630 to 633; it reads YHQL.

As to quaternary structure, the mature envelope protein (Env) consists of a trimer of SU-TM heterodimers attached by a labile interchain disulfide bond. The activated Env consists of SU monomers and TM trimers. Specific enzymatic cleavages in vivo yield mature proteins. Envelope glycoproteins are synthesized as an inactive precursor that is N-glycosylated and processed likely by host cell furin or by a furin-like protease in the Golgi to yield the mature SU and TM proteins. The cleavage site between SU and TM requires the minimal sequence [KR]-X-[KR]-R. The R-peptide is released from the C-terminus of the cytoplasmic tail of the TM protein upon particle formation as a result of proteolytic cleavage by the viral protease. Cleavage of this peptide is required for TM to become fusogenic. Post-translationally, the CXXC motif is highly conserved across a broad range of retroviral envelope proteins. It is thought to participate in the formation of a labile disulfide bond possibly with the CX6CC motif present in the transmembrane protein. Isomerization of the intersubunit disulfide bond to an SU intrachain disulfide bond is thought to occur upon receptor recognition in order to allow membrane fusion. In terms of processing, the transmembrane protein is palmitoylated. The R-peptide is palmitoylated.

The protein localises to the virion membrane. It is found in the host cell membrane. The surface protein (SU) attaches the virus to the host cell by binding to its receptor. This interaction activates a thiol in a CXXC motif of the C-terminal domain, where the other Cys residue participates in the formation of the intersubunit disulfide. The activated thiol will attack the disulfide and cause its isomerization into a disulfide isomer within the motif. This leads to SU displacement and TM refolding, and is thought to activate its fusogenic potential by unmasking its fusion peptide. Fusion occurs at the host cell plasma membrane. Functionally, the transmembrane protein (TM) acts as a class I viral fusion protein. Under the current model, the protein has at least 3 conformational states: pre-fusion native state, pre-hairpin intermediate state, and post-fusion hairpin state. During viral and target cell membrane fusion, the coiled coil regions (heptad repeats) assume a trimer-of-hairpins structure, positioning the fusion peptide in close proximity to the C-terminal region of the ectodomain. The formation of this structure appears to drive apposition and subsequent fusion of viral and target cell membranes. Membranes fusion leads to delivery of the nucleocapsid into the cytoplasm. This is Envelope glycoprotein (env) from Xenotropic MuLV-related virus (isolate VP35) (XMRV).